A 559-amino-acid polypeptide reads, in one-letter code: Paxillin (559 aa).

The short motif at 3-15 (DLDALLADLESTT) is the LD motif 1 element. Positions 17 to 139 (HISKRPVFLT…SPTMTSTSLG (123 aa)) are disordered. The residue at position 31 (Tyr31) is a Phosphotyrosine. Residues 45–54 (VPPPVPPPPS) show a composition bias toward pro residues. Residues 79-98 (QQPQSQSPIYSSSAKSSSAS) show a composition bias toward low complexity. Tyr118 bears the Phosphotyrosine; by FAK1 mark. The span at 121–137 (PNKQKSAEPSPTMTSTS) shows a compositional bias: polar residues. The LD motif 2 signature appears at 144–156 (ELDRLLLELNAVQ). Disordered stretches follow at residues 158–213 (NPPS…GIED) and 225–262 (LESS…SASS). The LD motif 3 signature appears at 217 to 229 (SVESLLDELESSV). Residues 237–262 (TVSQGEVSSPQRVNASQQQTRISASS) are compositionally biased toward polar residues. Residues 263-282 (ATRELDELMASLSDFKFMAQ) are required for binding to PARVA and ILK. Short sequence motifs (LD motif) lie at residues 266–277 (ELDELMASLSDF) and 301–313 (QLDT…QSDL). Residues 281–301 (AQGKAGGSSSPPSTTPKPGSQ) are disordered. 4 consecutive LIM zinc-binding domains span residues 326-376 (CGAC…CEKD), 385-435 (CYYC…CRKD), 444-494 (CGGC…CEVH), and 503-553 (CSGC…CQNC).

In terms of assembly, interacts (via LD motif 4) with PARVA/PARVIN and ILK. In terms of processing, phosphorylated on tyrosine residues during integrin-mediated cell adhesion, embryonic development, fibroblast transformation and following stimulation of cells by mitogens.

The protein resides in the cytoplasm. Its subcellular location is the cytoskeleton. The protein localises to the cell junction. It localises to the focal adhesion. It is found in the cell cortex. Functionally, cytoskeletal protein involved in actin-membrane attachment at sites of cell adhesion to the extracellular matrix (focal adhesion). Binds in vitro to vinculin as well as to the SH3 domain of c-SRC and, when tyrosine phosphorylated, to the SH2 domain of v-CRK. In Gallus gallus (Chicken), this protein is Paxillin (PXN).